Reading from the N-terminus, the 624-residue chain is uncharacterized protein (624 aa).

The segment at 113–249 is disordered; it reads SINVRTSATT…RFHPVTDINK (137 aa). Positions 118–225 are enriched in low complexity; sequence TSATTTESTN…ATTTESTNAS (108 aa). A compositionally biased stretch (basic and acidic residues) spans 226–249; it reads AKEDANKDGNAEDNRFHPVTDINK.

This is an uncharacterized protein from Saccharomyces cerevisiae (strain ATCC 204508 / S288c) (Baker's yeast).